A 208-amino-acid chain; its full sequence is FMN-dependent NADH:quinone oxidoreductase 2 (208 aa).

This sequence belongs to the azoreductase type 1 family. Homodimer. FMN is required as a cofactor.

The catalysed reaction is 2 a quinone + NADH + H(+) = 2 a 1,4-benzosemiquinone + NAD(+). It carries out the reaction N,N-dimethyl-1,4-phenylenediamine + anthranilate + 2 NAD(+) = 2-(4-dimethylaminophenyl)diazenylbenzoate + 2 NADH + 2 H(+). Quinone reductase that provides resistance to thiol-specific stress caused by electrophilic quinones. Functionally, also exhibits azoreductase activity. Catalyzes the reductive cleavage of the azo bond in aromatic azo compounds to the corresponding amines. This Bacillus anthracis protein is FMN-dependent NADH:quinone oxidoreductase 2.